The chain runs to 379 residues: Cytochrome b (379 aa).

A run of 4 helical transmembrane segments spans residues 33 to 53, 77 to 98, 113 to 133, and 178 to 198; these read FGSL…FLAM, WTIR…FIHV, WNVG…GYVL, and FFAL…IHLL. The heme b site is built by histidine 83 and histidine 97. Residues histidine 182 and histidine 196 each contribute to the heme b site. Residue histidine 201 coordinates a ubiquinone. 4 helical membrane-spanning segments follow: residues 226-246, 288-308, 320-340, and 347-367; these read TKDF…ALFY, LGGV…PFLQ, LSQF…WIGG, and FINI…FIMP.

It belongs to the cytochrome b family. The cytochrome bc1 complex contains 11 subunits: 3 respiratory subunits (MT-CYB, CYC1 and UQCRFS1), 2 core proteins (UQCRC1 and UQCRC2) and 6 low-molecular weight proteins (UQCRH/QCR6, UQCRB/QCR7, UQCRQ/QCR8, UQCR10/QCR9, UQCR11/QCR10 and a cleavage product of UQCRFS1). This cytochrome bc1 complex then forms a dimer. The cofactor is heme b.

Its subcellular location is the mitochondrion inner membrane. Functionally, component of the ubiquinol-cytochrome c reductase complex (complex III or cytochrome b-c1 complex) that is part of the mitochondrial respiratory chain. The b-c1 complex mediates electron transfer from ubiquinol to cytochrome c. Contributes to the generation of a proton gradient across the mitochondrial membrane that is then used for ATP synthesis. The sequence is that of Cytochrome b (MT-CYB) from Lepilemur sahamalazensis (Sahamalaza sportive lemur).